The primary structure comprises 374 residues: 4-hydroxy-3-methylbut-2-en-1-yl diphosphate synthase (flavodoxin) (374 aa).

[4Fe-4S] cluster is bound by residues cysteine 272, cysteine 275, cysteine 307, and glutamate 314.

Belongs to the IspG family. [4Fe-4S] cluster is required as a cofactor.

It carries out the reaction (2E)-4-hydroxy-3-methylbut-2-enyl diphosphate + oxidized [flavodoxin] + H2O + 2 H(+) = 2-C-methyl-D-erythritol 2,4-cyclic diphosphate + reduced [flavodoxin]. The protein operates within isoprenoid biosynthesis; isopentenyl diphosphate biosynthesis via DXP pathway; isopentenyl diphosphate from 1-deoxy-D-xylulose 5-phosphate: step 5/6. Functionally, converts 2C-methyl-D-erythritol 2,4-cyclodiphosphate (ME-2,4cPP) into 1-hydroxy-2-methyl-2-(E)-butenyl 4-diphosphate. The protein is 4-hydroxy-3-methylbut-2-en-1-yl diphosphate synthase (flavodoxin) of Acidiphilium cryptum (strain JF-5).